The chain runs to 141 residues: Hemoglobin subunit alpha (141 aa).

Positions 1 to 141 constitute a Globin domain; it reads VLSPADKTNI…VSTVLTSKYR (141 aa). A Phosphoserine modification is found at S3. Position 7 is an N6-succinyllysine (K7). A Phosphothreonine modification is found at T8. K11 is subject to N6-succinyllysine. K16 carries the post-translational modification N6-acetyllysine; alternate. K16 is subject to N6-succinyllysine; alternate. Phosphotyrosine is present on Y24. S35 is modified (phosphoserine). At K40 the chain carries N6-succinyllysine. S49 bears the Phosphoserine mark. H58 contributes to the O2 binding site. H87 is a heme b binding site. S102 is modified (phosphoserine). The residue at position 108 (T108) is a Phosphothreonine. Position 124 is a phosphoserine (S124). Phosphothreonine occurs at positions 134 and 137. A Phosphoserine modification is found at S138.

This sequence belongs to the globin family. In terms of assembly, heterotetramer of two alpha chains and two beta chains. In terms of tissue distribution, red blood cells.

In terms of biological role, involved in oxygen transport from the lung to the various peripheral tissues. Hemopressin acts as an antagonist peptide of the cannabinoid receptor CNR1. Hemopressin-binding efficiently blocks cannabinoid receptor CNR1 and subsequent signaling. This Vulpes vulpes (Red fox) protein is Hemoglobin subunit alpha (HBA).